Reading from the N-terminus, the 327-residue chain is ATP-dependent (S)-NAD(P)H-hydrate dehydratase (327 aa).

One can recognise a YjeF C-terminal domain in the interval 11-313 (LLTRVKRIIP…RHVGKAYNAL (303 aa)). (6S)-NADPHX is bound by residues G121 and 174 to 180 (NVIEFKR). ATP-binding positions include 209 to 213 (KGQSD) and 228 to 237 (GGLKRCGGQG). (6S)-NADPHX is bound at residue D238.

This sequence belongs to the NnrD/CARKD family. Requires Mg(2+) as cofactor.

The protein resides in the cytoplasm. It carries out the reaction (6S)-NADHX + ATP = ADP + phosphate + NADH + H(+). It catalyses the reaction (6S)-NADPHX + ATP = ADP + phosphate + NADPH + H(+). Catalyzes the dehydration of the S-form of NAD(P)HX at the expense of ATP, which is converted to ADP. Together with NAD(P)HX epimerase, which catalyzes the epimerization of the S- and R-forms, the enzyme allows the repair of both epimers of NAD(P)HX, a damaged form of NAD(P)H that is a result of enzymatic or heat-dependent hydration. The chain is ATP-dependent (S)-NAD(P)H-hydrate dehydratase from Schizosaccharomyces pombe (strain 972 / ATCC 24843) (Fission yeast).